The sequence spans 459 residues: UDP-N-acetylmuramoylalanine--D-glutamate ligase (459 aa).

119–125 (GTNGKTT) is a binding site for ATP.

This sequence belongs to the MurCDEF family.

Its subcellular location is the cytoplasm. It catalyses the reaction UDP-N-acetyl-alpha-D-muramoyl-L-alanine + D-glutamate + ATP = UDP-N-acetyl-alpha-D-muramoyl-L-alanyl-D-glutamate + ADP + phosphate + H(+). It participates in cell wall biogenesis; peptidoglycan biosynthesis. In terms of biological role, cell wall formation. Catalyzes the addition of glutamate to the nucleotide precursor UDP-N-acetylmuramoyl-L-alanine (UMA). In Lactiplantibacillus plantarum (strain ATCC BAA-793 / NCIMB 8826 / WCFS1) (Lactobacillus plantarum), this protein is UDP-N-acetylmuramoylalanine--D-glutamate ligase.